A 309-amino-acid chain; its full sequence is UDP-3-O-acyl-N-acetylglucosamine deacetylase (309 aa).

Histidine 78, histidine 235, and aspartate 239 together coordinate Zn(2+). Histidine 262 functions as the Proton donor in the catalytic mechanism.

Belongs to the LpxC family. Zn(2+) serves as cofactor.

It carries out the reaction a UDP-3-O-[(3R)-3-hydroxyacyl]-N-acetyl-alpha-D-glucosamine + H2O = a UDP-3-O-[(3R)-3-hydroxyacyl]-alpha-D-glucosamine + acetate. It participates in glycolipid biosynthesis; lipid IV(A) biosynthesis; lipid IV(A) from (3R)-3-hydroxytetradecanoyl-[acyl-carrier-protein] and UDP-N-acetyl-alpha-D-glucosamine: step 2/6. Catalyzes the hydrolysis of UDP-3-O-myristoyl-N-acetylglucosamine to form UDP-3-O-myristoylglucosamine and acetate, the committed step in lipid A biosynthesis. The sequence is that of UDP-3-O-acyl-N-acetylglucosamine deacetylase from Syntrophotalea carbinolica (strain DSM 2380 / NBRC 103641 / GraBd1) (Pelobacter carbinolicus).